Here is a 74-residue protein sequence, read N- to C-terminus: Conotoxin Cal27 (74 aa).

An N-terminal signal peptide occupies residues 1–19 (MSGTGVLLLTLLLLVAMAA).

In terms of processing, may contain 4 disulfide bonds. Expressed by the venom duct.

The protein resides in the secreted. Probable neurotoxin. This Californiconus californicus (California cone) protein is Conotoxin Cal27.